The sequence spans 299 residues: Urease accessory protein UreD (299 aa).

It belongs to the UreD family. In terms of assembly, ureD, UreF and UreG form a complex that acts as a GTP-hydrolysis-dependent molecular chaperone, activating the urease apoprotein by helping to assemble the nickel containing metallocenter of UreC. The UreE protein probably delivers the nickel.

The protein localises to the cytoplasm. Its function is as follows. Required for maturation of urease via the functional incorporation of the urease nickel metallocenter. The protein is Urease accessory protein UreD of Natronomonas pharaonis (strain ATCC 35678 / DSM 2160 / CIP 103997 / JCM 8858 / NBRC 14720 / NCIMB 2260 / Gabara) (Halobacterium pharaonis).